The following is a 555-amino-acid chain: Tetracycline 7-halogenase (555 aa).

Residue 22 to 27 coordinates FAD; that stretch reads GSGLSG.

The protein belongs to the flavin-dependent halogenase family. Bacterial tryptophan halogenase subfamily. Homodimer.

The enzyme catalyses tetracycline + FADH2 + chloride + O2 = 7-chlorotetracycline + FAD + 2 H2O + H(+). It functions in the pathway antibiotic biosynthesis. Involved in the biosynthesis of chlorotetracycline (CTC), an important member from antibiotics tetracycline (TC) family, which inhibits protein synthesis in bacteria and is widely involved in clinical therapy, animal feeds and aquaculture. Utilizes FADH(2) supplied by the flavin reductase CtcQ, to catalyze the chlorination of tetracycline (TC) at C7 position, leading to the production of 7-chlorotetracycline. The enzyme forms a lysine chloramine intermediate on an internal lysine residue before transferring the chlorine to the substrate. It is stereo-selective for the 4S (natural) isomer of tetracycline. The chain is Tetracycline 7-halogenase from Kitasatospora aureofaciens (Streptomyces aureofaciens).